Consider the following 859-residue polypeptide: Leucine--tRNA ligase (859 aa).

A 'HIGH' region motif is present at residues 42-52 (PYPSGRLHMGH). The 'KMSKS' region motif lies at 618 to 622 (KMSKS). K621 contributes to the ATP binding site.

This sequence belongs to the class-I aminoacyl-tRNA synthetase family.

It localises to the cytoplasm. It carries out the reaction tRNA(Leu) + L-leucine + ATP = L-leucyl-tRNA(Leu) + AMP + diphosphate. This chain is Leucine--tRNA ligase, found in Shewanella pealeana (strain ATCC 700345 / ANG-SQ1).